Consider the following 86-residue polypeptide: SEED MATURATION PROTEIN 1 (86 aa).

Positions 52–86 (RIEKGKEQSAASGDQTQIQRDIKDIKGTRTDDSPR) are disordered. The span at 60 to 70 (SAASGDQTQIQ) shows a compositional bias: polar residues. The span at 71-86 (RDIKDIKGTRTDDSPR) shows a compositional bias: basic and acidic residues.

The protein belongs to the LEA type 3 family.

Functionally, protein chaperone involved in seed maturation and dormancy maintenance after high temperature fluctuation (e.g. secondary dormancy after 3 days at 40 degrees Celsius), probably by protecting heat labile proteins required for secondary dormancy (e.g. G6PDH, HOP3, SR45, ECP63, SCL33, RPL32B, ChlADR1, MSBP1, MBF1B, At3g01690, At1g15280, At1g15290, At2g31410, At1g11630, At1g65090, EMB2279, EMB1674 and RPL35C). In Arabidopsis thaliana (Mouse-ear cress), this protein is SEED MATURATION PROTEIN 1.